The chain runs to 376 residues: MKIRVERDVLAEAVAWAARSLPARPPAPVLAGLLLKAEEGQLSLSSFDYEVSARVSVEAEIEEEGTVLVSGRLLADISRALPNRPVEISTDGVRATVVCGSSRFTLHTLPVEEYPALPQMPEATGTVPGEVFASAVQQVAIAAGRDDTLPVLTGVRIEIEGDSVTLASTDRYRFAVREFLWKPENPDISAVALVPAKTLQDTAKALTSGDQVILALSGSGAGEGLIGFEGAGRRTTTRLLEGDLPKYKTLFPTEFNSVAVIETAPFVEAVKRVALVAERNTPVRLSFEQGVLILEAGSSDDAQAVERVDAQLEGDDISIAFNPTFLLDGLSAIDSPVAQLSFTTSTKPALLSGRPAVDAEADEAYKYLIMPVRLSG.

Belongs to the beta sliding clamp family. In terms of assembly, forms a ring-shaped head-to-tail homodimer around DNA which binds and tethers DNA polymerases and other proteins to the DNA. The DNA replisome complex has a single clamp-loading complex (3 tau and 1 each of delta, delta', psi and chi subunits) which binds 3 Pol III cores (1 core on the leading strand and 2 on the lagging strand) each with a beta sliding clamp dimer. Additional proteins in the replisome are other copies of gamma, psi and chi, Ssb, DNA helicase and RNA primase.

The protein resides in the cytoplasm. Functionally, confers DNA tethering and processivity to DNA polymerases and other proteins. Acts as a clamp, forming a ring around DNA (a reaction catalyzed by the clamp-loading complex) which diffuses in an ATP-independent manner freely and bidirectionally along dsDNA. Initially characterized for its ability to contact the catalytic subunit of DNA polymerase III (Pol III), a complex, multichain enzyme responsible for most of the replicative synthesis in bacteria; Pol III exhibits 3'-5' exonuclease proofreading activity. The beta chain is required for initiation of replication as well as for processivity of DNA replication. This is Beta sliding clamp (dnaN) from Streptomyces coelicolor (strain ATCC BAA-471 / A3(2) / M145).